A 400-amino-acid chain; its full sequence is Large envelope protein (400 aa).

Residue M1 is modified to N-acetylmethionine. Disordered stretches follow at residues 1-55 (MGGW…WPEA) and 85-118 (LTTV…SHPQ). The N-myristoyl glycine; by host moiety is linked to residue G2. A pre-S1 region spans residues 2–119 (GGWSSKPRQG…PPLRDSHPQA (118 aa)). A pre-S region spans residues 2–174 (GGWSSKPRQG…FSRTGDPAPN (173 aa)). The Virion surface; in external conformation portion of the chain corresponds to 2–181 (GGWSSKPRQG…APNMESTTSG (180 aa)). Over 2–253 (GGWSSKPRQG…PGYRWMCLRR (252 aa)) the chain is Intravirion; in internal conformation. An N-linked (GlcNAc...) asparagine glycan is attached at W4. Residues 96–106 (STNRQSGRQPT) show a composition bias toward polar residues. The pre-S2 stretch occupies residues 120-174 (MQWNSTTFHQALLDPRVKGLYFPAGGSSSGTVNPVPTTASPISSIFSRTGDPAPN). A helical transmembrane segment spans residues 182 to 202 (FLGPLLVLQAGFFLLTRILTI). Residues 203–253 (PQSLDSWWTSLNFLGGAPTCPGQNSQSPTSNHSPTSCPPICPGYRWMCLRR) lie on the Intravirion; in external conformation side of the membrane. Residues 254-274 (FIIFLFILLLCLIFLLVLLDF) form a helical membrane-spanning segment. Topologically, residues 275-348 (QGMLPVCPLL…WASVRFSWLS (74 aa)) are virion surface. The N-linked (GlcNAc...) asparagine; by host glycan is linked to N320. Residues 349-369 (LLVPFVQWFAGLSPTVWLSVI) traverse the membrane as a helical segment. The Intravirion portion of the chain corresponds to 370 to 375 (WMMWYW). Residues 376 to 398 (GPSLYNILSPFLPLLPIFFCLWV) form a helical membrane-spanning segment. Residues 399–400 (YI) lie on the Virion surface side of the membrane.

This sequence belongs to the orthohepadnavirus major surface antigen family. In its internal form (Li-HBsAg), interacts with the capsid protein and with the isoform S. Interacts with host chaperone CANX. As to quaternary structure, associates with host chaperone CANX through its pre-S2 N glycan; this association may be essential for isoform M proper secretion. In terms of assembly, interacts with isoform L. Interacts with the antigens of satellite virus HDV (HDVAgs); this interaction is required for encapsidation of HDV genomic RNA. In terms of processing, isoform M is N-terminally acetylated by host at a ratio of 90%, and N-glycosylated by host at the pre-S2 region. Post-translationally, myristoylated.

The protein localises to the virion membrane. Functionally, the large envelope protein exists in two topological conformations, one which is termed 'external' or Le-HBsAg and the other 'internal' or Li-HBsAg. In its external conformation the protein attaches the virus to cell receptors and thereby initiating infection. This interaction determines the species specificity and liver tropism. This attachment induces virion internalization predominantly through caveolin-mediated endocytosis. The large envelope protein also assures fusion between virion membrane and endosomal membrane. In its internal conformation the protein plays a role in virion morphogenesis and mediates the contact with the nucleocapsid like a matrix protein. Its function is as follows. The middle envelope protein plays an important role in the budding of the virion. It is involved in the induction of budding in a nucleocapsid independent way. In this process the majority of envelope proteins bud to form subviral lipoprotein particles of 22 nm of diameter that do not contain a nucleocapsid. The protein is Large envelope protein of Hepatitis B virus genotype C subtype ar (isolate Japan/S-207/1988) (HBV-C).